Consider the following 249-residue polypeptide: MSAAFTISKKRKFVADGVFYAELNEFFTRELSEEGYSGCEVRVTPSRSEIIIRATHTQDVLGEKGRRIRELTALVQKRFKFAENTVELYAEKVQNRGLCAVAQCESLRYKLLAGLAVRRAAYGVLRYVMEAGAKGCEVVISGKLRAARAKSMKFADGFMIHSGQPAVDFIDSATRHVLLRQGVLGVKVKIMLPEPKTRQKKSLPDIVVVLDPKEEEPITKPYTVINQPVEAAAAAGQEVVAEQETAVAY.

The 72-residue stretch at 23-94 folds into the KH type-2 domain; that stretch reads LNEFFTRELS…TVELYAEKVQ (72 aa). Phosphoserine occurs at positions 32, 37, 106, and 141.

Belongs to the universal ribosomal protein uS3 family. In terms of assembly, component of the small ribosomal subunit (SSU). Mature yeast ribosomes consist of a small (40S) and a large (60S) subunit. The 40S small subunit contains 1 molecule of ribosomal RNA (18S rRNA) and at least 33 different proteins. The large 60S subunit contains 3 rRNA molecules (25S, 5.8S and 5S rRNA) and at least 46 different proteins.

The protein localises to the cytoplasm. Functionally, component of the ribosome, a large ribonucleoprotein complex responsible for the synthesis of proteins in the cell. The small ribosomal subunit (SSU) binds messenger RNAs (mRNAs) and translates the encoded message by selecting cognate aminoacyl-transfer RNA (tRNA) molecules. The large subunit (LSU) contains the ribosomal catalytic site termed the peptidyl transferase center (PTC), which catalyzes the formation of peptide bonds, thereby polymerizing the amino acids delivered by tRNAs into a polypeptide chain. The nascent polypeptides leave the ribosome through a tunnel in the LSU and interact with protein factors that function in enzymatic processing, targeting, and the membrane insertion of nascent chains at the exit of the ribosomal tunnel. In Schizosaccharomyces pombe (strain 972 / ATCC 24843) (Fission yeast), this protein is Small ribosomal subunit protein uS3 (rps3).